Reading from the N-terminus, the 492-residue chain is Probable sphingolipid transporter spinster homolog 1 (492 aa).

A helical membrane pass occupies residues 29–49 (FVTILCIINLINYVDRGVIAS). Asn-53 and Asn-76 each carry an N-linked (GlcNAc...) asparagine glycan. The next 7 membrane-spanning stretches (helical) occupy residues 83-103 (GLLS…FAGL), 119-139 (VWTI…IAVF), 141-161 (MFVG…IDDS), 169-189 (FWLG…YVFG), 200-220 (WAFY…FCIK), 279-299 (VFIV…AYSY), and 317-337 (IFGG…SYVL). Asn-341 is a glycosylation site (N-linked (GlcNAc...) asparagine). The next 4 membrane-spanning stretches (helical) occupy residues 348-368 (FKLL…AFLM), 372-392 (YAFI…QAPV), 407-427 (LSMA…SSPL), and 442-462 (TLII…GIFM). The residue at position 472 (Ser-472) is a Phosphoserine. Acidic residues predominate over residues 472-481 (SEDDEVEEDK). A disordered region spans residues 472-492 (SEDDEVEEDKLESKTENSTLA). Asn-488 carries an N-linked (GlcNAc...) asparagine glycan.

The protein belongs to the major facilitator superfamily. Spinster (TC 2.A.1.49) family.

The protein localises to the late endosome membrane. It is found in the lysosome membrane. Functionally, probable sphingolipid transporter that plays a central role in endosomes and/or lysosomes storage. The chain is Probable sphingolipid transporter spinster homolog 1 from Arabidopsis thaliana (Mouse-ear cress).